Consider the following 87-residue polypeptide: Small ribosomal subunit protein uS15c (87 aa).

Belongs to the universal ribosomal protein uS15 family. Part of the 30S ribosomal subunit.

Its subcellular location is the plastid. The protein resides in the chloroplast. This Oenothera argillicola (Appalachian evening primrose) protein is Small ribosomal subunit protein uS15c (rps15).